The following is a 280-amino-acid chain: Shikimate dehydrogenase (NADP(+)) (280 aa).

Residues serine 20–serine 22 and threonine 67 each bind shikimate. Lysine 71 acts as the Proton acceptor in catalysis. Aspartate 82 lines the NADP(+) pocket. Asparagine 91 and aspartate 106 together coordinate shikimate. NADP(+) is bound by residues glycine 131 to serine 135 and leucine 220. Tyrosine 222 contacts shikimate. Position 243 (glycine 243) interacts with NADP(+).

The protein belongs to the shikimate dehydrogenase family. As to quaternary structure, homodimer.

It catalyses the reaction shikimate + NADP(+) = 3-dehydroshikimate + NADPH + H(+). It functions in the pathway metabolic intermediate biosynthesis; chorismate biosynthesis; chorismate from D-erythrose 4-phosphate and phosphoenolpyruvate: step 4/7. Involved in the biosynthesis of the chorismate, which leads to the biosynthesis of aromatic amino acids. Catalyzes the reversible NADPH linked reduction of 3-dehydroshikimate (DHSA) to yield shikimate (SA). In Rhodopseudomonas palustris (strain HaA2), this protein is Shikimate dehydrogenase (NADP(+)).